Reading from the N-terminus, the 336-residue chain is Ornithine carbamoyltransferase, catabolic (336 aa).

Carbamoyl phosphate is bound by residues 57–60, glutamine 84, arginine 108, and 135–138; these read STRT and HPTQ. L-ornithine contacts are provided by residues asparagine 168, aspartate 232, and 236–237; that span reads SM. Residues 274 to 275 and arginine 321 contribute to the carbamoyl phosphate site; that span reads CL.

The protein belongs to the aspartate/ornithine carbamoyltransferase superfamily. OTCase family.

The protein resides in the cytoplasm. It carries out the reaction carbamoyl phosphate + L-ornithine = L-citrulline + phosphate + H(+). It functions in the pathway amino-acid degradation; L-arginine degradation via ADI pathway; carbamoyl phosphate from L-arginine: step 2/2. Its function is as follows. Reversibly catalyzes the transfer of the carbamoyl group from carbamoyl phosphate (CP) to the N(epsilon) atom of ornithine (ORN) to produce L-citrulline. The polypeptide is Ornithine carbamoyltransferase, catabolic (Burkholderia pseudomallei (strain K96243)).